Reading from the N-terminus, the 75-residue chain is MNKSRHSSRRRSPSIRSDETIDYKNTSLLRRFVSEQGKILSRRMNRLTSKQQRLIATAIKRARILALLPFSNNES.

This sequence belongs to the bacterial ribosomal protein bS18 family. Part of the 30S ribosomal subunit.

It localises to the plastid. It is found in the chloroplast. This is Small ribosomal subunit protein bS18c from Adiantum capillus-veneris (Maidenhair fern).